The primary structure comprises 412 residues: MTLRRRGEKATISIQEHMAIDVCPGPIRPIKQISDYFPRFPRGLPPDAGPRAAAPPDAPARPAVAGAGRRSPSDGAREDDEDVDQLFGAYGSSPGPSPGPSPARPPAKPPEDEPDADGYESDDCTALGTLDFSLLYDQENNALHCTITKAKGLKPMDHNGLADPYVKLHLLPGASKANKLRTKTLRNTLNPTWNETLTYYGITDEDMIRKTLRISVCDEDKFRHNEFIGETRVPLKKLKPNHTKTFSICLEKQLPVDKTEDKSLEERGRILISLKYSSQKQGLLVGIVRCAHLAAMDANGYSDPYVKTYLRPDVDKKSKHKTAVKKKTLNPEFNEEFCYEIKHGDLAKKSLEVTVWDYDIGKSNDFIGGVVLGIHAKGERLKHWFDCLKNKDKRIERWHTLTSELPGAVLSD.

The tract at residues 1–36 (MTLRRRGEKATISIQEHMAIDVCPGPIRPIKQISDY) is negatively regulates targeting to plasma membrane. The interval 1–90 (MTLRRRGEKA…EDVDQLFGAY (90 aa)) is mediates interaction with DYNLT1. The tract at residues 38–123 (PRFPRGLPPD…PDADGYESDD (86 aa)) is disordered. Residues 49–70 (GPRAAAPPDAPARPAVAGAGRR) are compositionally biased toward low complexity. The span at 95 to 108 (GPSPGPSPARPPAK) shows a compositional bias: pro residues. Residues 112-123 (DEPDADGYESDD) are compositionally biased toward acidic residues. C2 domains are found at residues 126 to 250 (ALGT…SICL) and 266 to 399 (ERGR…ERWH). 9 residues coordinate Ca(2+): D157, D163, D218, D220, D297, D303, D357, D359, and D365. The tract at residues 257–375 (DKTEDKSLEE…FIGGVVLGIH (119 aa)) is mediates interaction with STXBP3. S411 is subject to Phosphoserine.

Interacts with the SNARE (soluble N-ethylmaleimide-sensitive factor attached protein receptor) complex composed of SNAP25, STX1A and VAMP2; the interaction is calcium-dependent and competitive with SYT1. Interacts with STX4; the interaction is calcium-dependent, increased by insulin and glucose, and mediates vesicle fusion with plasma membrane in pancreatic cells and adipocytes. Interacts with STXBP3; the interaction is direct, occurs at the cell membrane and regulates glucose-stimulated insulin secretion. May interact with UNC13A; the interaction mediates targeting to the plasma membrane. Interacts with cytoplasmic dynein light chain DYNLT1. Ca(2+) is required as a cofactor. Widely expressed with highest levels in brain and kidney. Expressed in pancreatic islet cells (at protein level).

Its subcellular location is the cytoplasm. It is found in the cytoplasmic granule. It localises to the cell membrane. Functionally, calcium sensor which positively regulates SNARE-dependent fusion of vesicles with membranes. Binds phospholipids in a calcium-dependent manner and may act at the priming stage of fusion by modifying membrane curvature to stimulate fusion. Involved in calcium-triggered exocytosis in chromaffin cells and calcium-dependent spontaneous release of neurotransmitter in absence of action potentials in neuronal cells. Involved both in glucose-stimulated insulin secretion in pancreatic cells and insulin-dependent GLUT4 transport to the plasma membrane in adipocytes. This Homo sapiens (Human) protein is Double C2-like domain-containing protein beta.